The chain runs to 293 residues: Xyloglucan endotransglucosylase/hydrolase protein 31 (293 aa).

The signal sequence occupies residues 1-20 (MALSLIFLALLVLCPSSGHS). One can recognise a GH16 domain in the interval 29–230 (YPSSRVPTSP…YRYQPFVAKY (202 aa)). The active-site Nucleophile is Glu-114. The Proton donor role is filled by Glu-118. Xyloglucan contacts are provided by residues Glu-118, 131-133 (QTN), 141-148 (DRNVIGRE), and 209-210 (DW). Disulfide bonds link Cys-238-Cys-246 and Cys-280-Cys-293. Arg-285 provides a ligand contact to xyloglucan.

This sequence belongs to the glycosyl hydrolase 16 family. XTH group 3 subfamily. Interacts with XTH17. The formation of an XTH17-XTH31 dimer may be required for XET activity. In terms of processing, contains at least one intrachain disulfide bond essential for its enzymatic activity. In terms of tissue distribution, predominantly expressed in root. Weakly expressed in influorescence stems. Expressed in root tips and elongation zones, stems, young leaves, flowers and siliques. Expressed in root, hypocotyl, and etiolated whole seedlings.

It localises to the secreted. The protein resides in the cell wall. It is found in the extracellular space. The protein localises to the apoplast. Its subcellular location is the cell membrane. The enzyme catalyses breaks a beta-(1-&gt;4) bond in the backbone of a xyloglucan and transfers the xyloglucanyl segment on to O-4 of the non-reducing terminal glucose residue of an acceptor, which can be a xyloglucan or an oligosaccharide of xyloglucan.. The catalysed reaction is xyloglucan + H2O = xyloglucan oligosaccharides.. Its function is as follows. Catalyzes xyloglucan endohydrolysis (XEH) and/or endotransglycosylation (XET). Cleaves and religates xyloglucan polymers, an essential constituent of the primary cell wall, and thereby participates in cell wall construction of growing tissues. Involved in the accumulation of hemicelluloses. Has a high XEH activity and only a slight XET activity in vitro, but the main in planta activity seems to be XET, thus controlling aluminum sensitivity. Acceptor preferences are XXXGol = XXFGol &gt; XXLGol &gt; XLLGol = XLFGol. The sequence is that of Xyloglucan endotransglucosylase/hydrolase protein 31 from Arabidopsis thaliana (Mouse-ear cress).